We begin with the raw amino-acid sequence, 77 residues long: Conotoxin Lt7.1 (77 aa).

The signal sequence occupies residues 1–19; it reads MEKLTILLLVAALLMSTQG. The propeptide occupies 20–49; it reads LIQSGGENRPKEKIKFLSKRKTVAESWWEG. Disulfide bonds link Cys-51/Cys-65, Cys-58/Cys-69, and Cys-64/Cys-74.

Belongs to the conotoxin O2 superfamily. As to expression, expressed by the venom duct.

It localises to the secreted. The sequence is that of Conotoxin Lt7.1 from Conus litteratus (Lettered cone).